The primary structure comprises 279 residues: Acetylglutamate kinase (279 aa).

Residues G64–G65, R86, and N177 each bind substrate.

The protein belongs to the acetylglutamate kinase family. ArgB subfamily.

The protein localises to the cytoplasm. It catalyses the reaction N-acetyl-L-glutamate + ATP = N-acetyl-L-glutamyl 5-phosphate + ADP. It functions in the pathway amino-acid biosynthesis; L-arginine biosynthesis; N(2)-acetyl-L-ornithine from L-glutamate: step 2/4. Its function is as follows. Catalyzes the ATP-dependent phosphorylation of N-acetyl-L-glutamate. The protein is Acetylglutamate kinase of Campylobacter jejuni subsp. jejuni serotype O:2 (strain ATCC 700819 / NCTC 11168).